The chain runs to 438 residues: MGKPIVAIVGRPNVGKSTLFNKLAGKRIAIVDDMPGVTRDRIYAEAEWLNNNFTIIDTGGIEPENDDIIVAQMRRQAQLAIEMADVVLFIVDGKQGLTDADREVAHMLRKASKSIVLAVNKIDRRQLDDNIYEFYNLGLGDPMPISASQGLGLGDLLDEVIEKFPEGNVEEEEDEYIRIAMIGRPNVGKSSLINKILGEEKHIVSNIPGTTRDAVDSYVETEEGKFVLIDTAGLRRKSKIKEQVERYSAVRTLASIENADVCILMIDATEDIAEQDERIIGYAHEINKAILVIVNKWDLIEKDDKTMKNFKDKLRTKLSFLPYASFLFISAKTGQRVHKVLGMAKECYGNYCKRIKTGILNDIINKAVLMKEPPVMGTRRLKIYYVTQIGTKPPTFVFFVNDPELLHFSYRRYLENKLRESFDFSGTGIKLEFRERKE.

EngA-type G domains are found at residues 4–168 (PIVA…PEGN) and 177–352 (IRIA…GNYC). GTP-binding positions include 10 to 17 (GRPNVGKS), 57 to 61 (DTGGI), 120 to 123 (NKID), 183 to 190 (GRPNVGKS), 230 to 234 (DTAGL), and 295 to 298 (NKWD). The KH-like domain maps to 353-437 (KRIKTGILND…GIKLEFRERK (85 aa)).

The protein belongs to the TRAFAC class TrmE-Era-EngA-EngB-Septin-like GTPase superfamily. EngA (Der) GTPase family. In terms of assembly, associates with the 50S ribosomal subunit.

Functionally, GTPase that plays an essential role in the late steps of ribosome biogenesis. The polypeptide is GTPase Der (Clostridium novyi (strain NT)).